The chain runs to 232 residues: Purine nucleoside phosphorylase DeoD-type (232 aa).

H4 contributes to the a purine D-ribonucleoside binding site. Residues G20, R24, R43, and 87–90 (RVGS) contribute to the phosphate site. Residues E162, 178–180 (EME), and 202–203 (SD) contribute to the a purine D-ribonucleoside site. Catalysis depends on D203, which acts as the Proton donor.

Belongs to the PNP/UDP phosphorylase family. Homohexamer; trimer of homodimers.

The enzyme catalyses a purine D-ribonucleoside + phosphate = a purine nucleobase + alpha-D-ribose 1-phosphate. It carries out the reaction a purine 2'-deoxy-D-ribonucleoside + phosphate = a purine nucleobase + 2-deoxy-alpha-D-ribose 1-phosphate. Functionally, catalyzes the reversible phosphorolytic breakdown of the N-glycosidic bond in the beta-(deoxy)ribonucleoside molecules, with the formation of the corresponding free purine bases and pentose-1-phosphate. The protein is Purine nucleoside phosphorylase DeoD-type of Bacillus velezensis (strain DSM 23117 / BGSC 10A6 / LMG 26770 / FZB42) (Bacillus amyloliquefaciens subsp. plantarum).